A 3419-amino-acid chain; its full sequence is Genome polyprotein (3419 aa).

The interval 1–25 is disordered; that stretch reads MKNPKEEIRRIRIVNMLKRGVARVN. The Cytoplasmic segment spans residues 1–104; the sequence is MKNPKEEIRR…INARKERKRR (104 aa). Residues 37-72 are hydrophobic; homodimerization of capsid protein C; the sequence is LLLGHGPIRMVLAILAFLRFTAIKPSLGLINRWGSV. A propeptide spans 105–122 (ER anchor for capsid protein C, removed in mature form by serine protease NS3); the sequence is GADTSIGIIGLLLTTAMA. The helical transmembrane segment at 105 to 125 threads the bilayer; that stretch reads GADTSIGIIGLLLTTAMAAEI. The Extracellular portion of the chain corresponds to 126-249; the sequence is TRRGSAYYMY…YTKHLIKVEN (124 aa). Residue asparagine 192 is glycosylated (N-linked (GlcNAc...) asparagine; by host). The chain crosses the membrane as a helical span at residues 250 to 269; it reads WIFRNPGFALVAVAIAWLLG. Over 270 to 274 the chain is Cytoplasmic; sequence SSTSQ. A helical membrane pass occupies residues 275 to 290; it reads KVIYLVMILLIAPAYS. Over 291-741 the chain is Extracellular; it reads IRCIGVSNRD…HQIFGAAFKS (451 aa). Cysteines 293 and 320 form a disulfide. Residue lysine 328 forms a Glycyl lysine isopeptide (Lys-Gly) (interchain with G-Cter in ubiquitin) linkage. 7 disulfides stabilise this stretch: cysteine 350-cysteine 406, cysteine 350-cysteine 411, cysteine 364-cysteine 395, cysteine 382-cysteine 406, cysteine 382-cysteine 411, cysteine 476-cysteine 577, and cysteine 594-cysteine 625. Residues 388–401 form a fusion peptide region; it reads DRGWGNGCGLFGKG. Residue lysine 567 forms a Glycyl lysine isopeptide (Lys-Gly) (interchain with G-Cter in ubiquitin) linkage. A helical membrane pass occupies residues 742–763; sequence LFGGMSWFSQILIGTLLVWLGL. The Cytoplasmic portion of the chain corresponds to 764-769; that stretch reads NTKNGS. A helical membrane pass occupies residues 770-790; that stretch reads ISLTCLALGGVMIFLSTAVSA. Residues 791–1173 are Lumenal-facing; that stretch reads DVGCSVDFSK…EGLKKRMTTK (383 aa). Intrachain disulfides connect cysteine 794–cysteine 805, cysteine 845–cysteine 933, cysteine 969–cysteine 1013, cysteine 1070–cysteine 1119, cysteine 1081–cysteine 1102, and cysteine 1103–cysteine 1106. N-linked (GlcNAc...) asparagine; by host glycans are attached at residues asparagine 920 and asparagine 997. The chain crosses the membrane as a helical span at residues 1174–1194; sequence IIMSTSMAVLVVMILGGFSMS. Topologically, residues 1195-1216 are cytoplasmic; that stretch reads DLAKLVILMGATFAEMNTGGDV. A helical membrane pass occupies residues 1217–1237; that stretch reads AHLALVAAFKVRPALLVSFIF. Over 1238 to 1266 the chain is Lumenal; the sequence is RANWTPRESMLLALASCLLQTAISALEGD. Residues 1267–1287 form a helical membrane-spanning segment; sequence LMVLINGFALAWLAIRAMAVP. Topologically, residues 1288 to 1291 are cytoplasmic; sequence RTDN. The chain crosses the membrane as a helical span at residues 1292–1312; it reads IALPILAALTPLARGTLLVAW. The Lumenal segment spans residues 1313–1341; it reads RAGLATCGGIMLLSLKGKGSVKKNLPFVM. The helical transmembrane segment at 1342–1362 threads the bilayer; that stretch reads ALGLTAVRVVDPINVVGLLLL. Residues 1363–1369 are Cytoplasmic-facing; the sequence is TRSGKRS. Residues 1370-1390 form a helical membrane-spanning segment; that stretch reads WPPSEVLTAVGLICALAGGFA. The Lumenal segment spans residues 1391-1393; sequence KAD. Residues 1394 to 1414 traverse the membrane as a helical segment; that stretch reads IEMAGPMAAVGLLIVSYVVSG. The Cytoplasmic segment spans residues 1415–1468; it reads KSVDMYIERAGDITWEKDAEVTGNSPRLDVALDESGDFSLVEEDGPPMREIILK. Positions 1421–1460 are interacts with and activates NS3 protease; sequence IERAGDITWEKDAEVTGNSPRLDVALDESGDFSLVEEDGP. Residues 1425–1447 are disordered; the sequence is GDITWEKDAEVTGNSPRLDVALD. The segment at residues 1469–1489 is an intramembrane region (helical); sequence VVLMAICGMNPIAIPFAAGAW. Topologically, residues 1490-2166 are lumenal; it reads YVYVKTGKRS…KAAAAQLPET (677 aa). One can recognise a Peptidase S7 domain in the interval 1499-1676; sequence SGALWDVPAP…KREEETPVEC (178 aa). Catalysis depends on charge relay system; for serine protease NS3 activity residues histidine 1549, aspartate 1573, and serine 1633. The Helicase ATP-binding domain maps to 1679 to 1835; that stretch reads PSMLKKKQLT…DSNSPIMDTE (157 aa). An important for RNA-binding region spans residues 1683–1686; sequence KKKQ. Residue 1692–1699 participates in ATP binding; sequence LHPGAGKT. The short motif at 1783–1786 is the DEAH box element; sequence DEAH. The Helicase C-terminal domain maps to 1830-2009; it reads PIMDTEVEVP…GLIASLYRPE (180 aa). Lysine 1887 is modified (N6-acetyllysine; by host). Residues 2167 to 2187 form a helical membrane-spanning segment; that stretch reads LETIMLLGLLGTVSLGIFFVL. Topologically, residues 2188–2191 are lumenal; sequence MRNK. Residues 2192-2212 constitute an intramembrane region (helical); sequence GIGKMGFGMVTLGASAWLMWL. At 2213-2214 the chain is on the cytoplasmic side; that stretch reads SE. Residues 2215–2235 traverse the membrane as a helical segment; the sequence is IEPARIACVLIVVFLLLVVLI. The Lumenal portion of the chain corresponds to 2236 to 2250; it reads PEPEKQRSPQDNQMA. The helical intramembrane region spans 2251 to 2265; that stretch reads IIIMVAVGLLGLITA. Residues 2266 to 2303 lie on the Lumenal side of the membrane; the sequence is NELGWLERTKNDIAHLMGRREEGATMGFSMDIDLRPAS. The helical intramembrane region spans 2304 to 2324; the sequence is AWAIYAALTTLITPAVQHAVT. At 2325 to 2340 the chain is on the lumenal side; it reads TSYNNYSLMAMATQAG. Residues 2341 to 2361 form a helical membrane-spanning segment; that stretch reads VLFGMGKGMPFMHGDLGVPLL. Over 2362–2371 the chain is Cytoplasmic; that stretch reads MMGCYSQLTP. The chain crosses the membrane as a helical span at residues 2372–2392; it reads LTLIVAIILLVAHYMYLIPGL. Residues 2393–2437 lie on the Lumenal side of the membrane; it reads QAAAARAAQKRTAAGIMKNPVVDGIVVTDIDTMTIDPQVEKKMGQ. Residues 2438 to 2458 traverse the membrane as a helical segment; that stretch reads VLLIAVAISSAVLLRTAWGWG. Residues 2459–3419 are Cytoplasmic-facing; the sequence is EAGALITAAT…GEEGSTPGVL (961 aa). The mRNA cap 0-1 NS5-type MT domain maps to 2517 to 2781; the sequence is GGGTGETLGE…DVNLGSGTRA (265 aa). Residues lysine 2529, leucine 2532, asparagine 2533, methionine 2535, phenylalanine 2540, and lysine 2544 each coordinate mRNA. Residue 2529 to 2535 coordinates GTP; sequence KARLNQM. Serine 2572 is an S-adenosyl-L-methionine binding site. Serine 2572 is subject to Phosphoserine. Lysine 2577 functions as the For 2'-O-MTase activity in the catalytic mechanism. Positions 2593 to 2596 are SUMO-interacting motif (SIM); it reads VVDL. 10 residues coordinate S-adenosyl-L-methionine: glycine 2602, tryptophan 2603, threonine 2620, lysine 2621, histidine 2626, glutamate 2627, aspartate 2647, valine 2648, aspartate 2662, and isoleucine 2663. Aspartate 2662 serves as the catalytic For 2'-O-MTase activity. 2665–2671 is a binding site for GTP; the sequence is ESSSSPE. MRNA is bound at residue serine 2666. Lysine 2698 functions as the For 2'-O-MTase activity in the catalytic mechanism. Arginine 2729 and serine 2731 together coordinate mRNA. A GTP-binding site is contributed by 2729-2731; sequence RNS. Residue glutamate 2734 is the For 2'-O-MTase activity of the active site. An S-adenosyl-L-methionine-binding site is contributed by tyrosine 2736. A Nuclear localization signal (NLS) motif is present at residues 2904-2910; that stretch reads KRKRPRV. Zn(2+)-binding residues include glutamate 2955, histidine 2959, cysteine 2964, and cysteine 2967. A RdRp catalytic domain is found at 3045-3195; sequence GKMYADDTAG…KPIDDRFAHA (151 aa). Zn(2+) contacts are provided by histidine 3230, cysteine 3246, and cysteine 3365.

In the N-terminal section; belongs to the class I-like SAM-binding methyltransferase superfamily. mRNA cap 0-1 NS5-type methyltransferase family. In terms of assembly, homodimer. Interacts with host SERTAD3; this interaction promotes capsid protein C degradation. Interacts with host CAPRIN1; this interaction is probably linked to the inhibition of stress granules formation by the virus. Interacts with host G3BP1; this interaction is probably linked to the inhibition of stress granules formation by the virus. Forms heterodimers with envelope protein E in the endoplasmic reticulum and Golgi. Interacts with non-structural protein 2A. As to quaternary structure, homodimer; in the endoplasmic reticulum and Golgi. Interacts with host TYRO3, AXL and DC-SIGN proteins. Interacts with non-structural protein 2A. Interacts with host HAVCR1; this interaction likely mediates virus attachment to host cell. Interacts with host NCAM1. Interacts with host HSPA5. Interacts with Aedes aegypti SRPN25, APY and venom allergen-1 salivary proteins; the interactions do not affect Zika virus replication in human endothelial cells and keratinocytes. In terms of assembly, homodimer; Homohexamer when secreted. Interacts with host TBK1. Interacts with host USP8. Interacts with envelope protein E. Interacts with host HSPA5. Interacts with the structural protein prM/E complex, and the NS2B/NS3 protease complex. As to quaternary structure, forms a heterodimer with serine protease NS3. May form homooligomers. Interacts with human SPCS1. Interacts with non-structural protein 2A. In terms of assembly, forms a heterodimer with NS2B. Interacts with NS4B. Interacts with unphosphorylated RNA-directed RNA polymerase NS5; this interaction stimulates RNA-directed RNA polymerase NS5 guanylyltransferase activity. Interacts with non-structural protein 2A. Interacts with host SHFL; this interaction promotes NS3 degradation via a lysosome-dependent pathway. Interacts with host CEP63; this interaction disorganizes the centrosome and inhibits host innate immune response. May interact with host ANKLE2; the interaction may cause defects in brain development, such as microcephaly. May interact with host SRPRA and SEC61G. As to quaternary structure, interacts with serine protease NS3. Interacts with NS1. Interacts with host TBK1. In terms of assembly, homodimer. Interacts with host STAT2; this interaction inhibits the phosphorylation of the latter, and, when all viral proteins are present (polyprotein), targets STAT2 for degradation. Interacts with host TBK1 and IKBKE; these interactions lead to the inhibition of the host RIG-I signaling pathway. Interacts with host KPNA2. Interacts with host PAF1 complex; the interaction may prevent the recruitment of the host PAF1 complex to interferon-responsive genes, and thus reduces the immune response. Interacts with serine protease NS3. Interacts with host ZSWIM8; this interaction allows STAT2 binding to ZSWIM8 and subsequent proteasomal degradation leading to inhibition of interferon signaling. Specific enzymatic cleavages in vivo yield mature proteins. Cleavages in the lumen of endoplasmic reticulum are performed by host signal peptidase, whereas cleavages in the cytoplasmic side are performed by serine protease NS3. Signal cleavage at the 2K-4B site requires a prior NS3 protease-mediated cleavage at the 4A-2K site. In terms of processing, cleaved in post-Golgi vesicles by a host furin, releasing the mature small envelope protein M, and peptide pr. This cleavage is incomplete as up to 30% of viral particles still carry uncleaved prM. Post-translationally, N-glycosylation plays a role in virulence in mammalian and mosquito hosts, but may have no effect on neurovirulence. Ubiquitination by host TRIM7 promotes virus attachment and fusion of the virus and the host endosome membrane. In terms of processing, N-glycosylated. The excreted form is glycosylated, which is required for efficient secretion of the protein from infected cells. Post-translationally, acetylated by host KAT5. Acetylation modulates NS3 RNA-binding and unwinding activities and plays an important positive role for viral replication. Phosphorylated on serines residues. This phosphorylation may trigger NS5 nuclear localization. In terms of processing, sumoylated, required for regulating IFN induced interferon stimulated genes/ISGs.

Its subcellular location is the virion. The protein localises to the host nucleus. It localises to the host cytoplasm. It is found in the host perinuclear region. The protein resides in the secreted. Its subcellular location is the virion membrane. The protein localises to the host endoplasmic reticulum membrane. The enzyme catalyses Selective hydrolysis of -Xaa-Xaa-|-Yaa- bonds in which each of the Xaa can be either Arg or Lys and Yaa can be either Ser or Ala.. It carries out the reaction RNA(n) + a ribonucleoside 5'-triphosphate = RNA(n+1) + diphosphate. The catalysed reaction is a ribonucleoside 5'-triphosphate + H2O = a ribonucleoside 5'-diphosphate + phosphate + H(+). It catalyses the reaction ATP + H2O = ADP + phosphate + H(+). The enzyme catalyses a 5'-end (5'-triphosphoguanosine)-ribonucleoside in mRNA + S-adenosyl-L-methionine = a 5'-end (N(7)-methyl 5'-triphosphoguanosine)-ribonucleoside in mRNA + S-adenosyl-L-homocysteine. It carries out the reaction a 5'-end (N(7)-methyl 5'-triphosphoguanosine)-ribonucleoside in mRNA + S-adenosyl-L-methionine = a 5'-end (N(7)-methyl 5'-triphosphoguanosine)-(2'-O-methyl-ribonucleoside) in mRNA + S-adenosyl-L-homocysteine + H(+). Its function is as follows. Plays a role in virus budding by binding to the host cell membrane and packages the viral RNA into a nucleocapsid that forms the core of the mature virus particle. During virus entry, may induce genome penetration into the host cytoplasm after hemifusion induced by the surface proteins. Can migrate to the cell nucleus where it modulates host functions. Inhibits the integrated stress response (ISR) in the infected cell. Inhibits RNA silencing by interfering with host Dicer. Functionally, prevents premature fusion activity of envelope proteins in trans-Golgi by binding to envelope protein E at pH 6.0. After virion release in extracellular space, gets dissociated from E dimers. In terms of biological role, plays a role in host immune defense modulation and protection of envelope protein E during virion synthesis. PrM-E cleavage is inefficient, many virions are only partially matured and immature prM-E proteins could play a role in immune evasion. Contributes to fetal microcephaly in humans. Acts as a chaperone for envelope protein E during intracellular virion assembly by masking and inactivating envelope protein E fusion peptide. prM is the only viral peptide matured by host furin in the trans-Golgi network probably to avoid catastrophic activation of the viral fusion activity in acidic Golgi compartment prior to virion release. Its function is as follows. May play a role in virus budding. Exerts cytotoxic effects by activating a mitochondrial apoptotic pathway through M ectodomain. May display a viroporin activity. Binds to host cell surface receptors and mediates fusion between viral and cellular membranes. Efficient virus attachment to cell is, at least in part, mediated by host HAVCR1 in a cell-type specific manner. In addition, host NCAM1 can also be used as entry receptor. Interaction with host HSPA5 plays an important role in the early stages of infection as well. Envelope protein is synthesized in the endoplasmic reticulum and forms a heterodimer with protein prM. The heterodimer plays a role in virion budding in the ER, and the newly formed immature particle is covered with 60 spikes composed of heterodimers between precursor prM and envelope protein E. The virion is transported to the Golgi apparatus where the low pH causes the dissociation of PrM-E heterodimers and formation of E homodimers. PrM-E cleavage is inefficient, many virions are only partially matured and immature prM-E proteins could play a role in immune evasion. Functionally, plays a role in the inhibition of host RLR-induced interferon-beta activation by targeting TANK-binding kinase 1/TBK1. In addition, recruits the host deubiquitinase USP8 to cleave 'Lys-11'-linked polyubiquitin chains from caspase-1/CASP1 thus inhibiting its proteasomal degradation. In turn, stabilized CASP1 promotes cleavage of cGAS, which inhibits its ability to recognize mitochondrial DNA release and initiate type I interferon signaling. In terms of biological role, component of the viral RNA replication complex that recruits genomic RNA, the structural protein prM/E complex, and the NS2B/NS3 protease complex to the virion assembly site and orchestrates virus morphogenesis. Antagonizes also the host MDA5-mediated induction of alpha/beta interferon antiviral response. May disrupt adherens junction formation and thereby impair proliferation of radial cells in the host cortex. Its function is as follows. Required cofactor for the serine protease function of NS3. Displays three enzymatic activities: serine protease, NTPase and RNA helicase. NS3 serine protease, in association with NS2B, performs its autocleavage and cleaves the polyprotein at dibasic sites in the cytoplasm: C-prM, NS2A-NS2B, NS2B-NS3, NS3-NS4A, NS4A-2K and NS4B-NS5. NS3 RNA helicase binds RNA and unwinds dsRNA in the 3' to 5' direction. Leads to translation arrest when expressed ex vivo. Disrupts host centrosome organization in a CEP63-dependent manner to degrade host TBK1 and inhibits innate immune response. Inhibits the integrated stress response (ISR) in the infected cell. Functionally, regulates the ATPase activity of the NS3 helicase activity. NS4A allows NS3 helicase to conserve energy during unwinding. Cooperatively with NS4B suppresses the Akt-mTOR pathway and leads to cellular dysregulation. By inhibiting host ANKLE2 functions, may cause defects in brain development, such as microcephaly. Also antagonizes the host MDA5-mediated induction of alpha/beta interferon antiviral response. Inhibits the integrated stress response (ISR) in the infected cell. In terms of biological role, functions as a signal peptide for NS4B and is required for the interferon antagonism activity of the latter. Its function is as follows. Induces the formation of ER-derived membrane vesicles where the viral replication takes place. Also plays a role in the inhibition of host RLR-induced interferon-beta production at TANK-binding kinase 1/TBK1 level. Cooperatively with NS4A suppresses the Akt-mTOR pathway and leads to cellular dysregulation. Replicates the viral (+) and (-) RNA genome, and performs the capping of genomes in the cytoplasm. Methylates viral RNA cap at guanine N-7 and ribose 2'-O positions. Once sufficient NS5 is expressed, binds to the cap-proximal structure and inhibits further translation of the viral genome. Besides its role in RNA genome replication, also prevents the establishment of a cellular antiviral state by blocking the interferon-alpha/beta (IFN-alpha/beta) signaling pathway. Mechanistically, interferes with host kinases TBK1 and IKKE upstream of interferon regulatory factor 3/IRF3 to inhibit the RIG-I pathway. Also antagonizes type I interferon signaling by targeting STAT2 for degradation by the proteasome thereby preventing activation of JAK-STAT signaling pathway. Mechanistically, acts as a scaffold protein to connect host ZSWIM8/CUL3 ligase complex and STAT2, leading to STAT2 degradation. Within the host nucleus, disrupts host SUMO1 and STAT2 co-localization with PML, resulting in PML degradation. May also reduce immune responses by preventing the recruitment of the host PAF1 complex to interferon-responsive genes. The polypeptide is Genome polyprotein (Aedes aegypti (Yellowfever mosquito)).